The primary structure comprises 261 residues: Nickel import ATP-binding protein NikD (261 aa).

The 243-residue stretch at 6–248 folds into the ABC transporter domain; sequence LRIEGLTIAT…PRHDATRALV (243 aa). Position 41–48 (41–48) interacts with ATP; it reads GASGSGKS.

Belongs to the ABC transporter superfamily. Nickel importer (TC 3.A.1.5.3) family. In terms of assembly, the complex is composed of two ATP-binding proteins (NikD and NikE), two transmembrane proteins (NikB and NikC) and a solute-binding protein (NikA).

Its subcellular location is the cell inner membrane. It catalyses the reaction Ni(2+)(out) + ATP + H2O = Ni(2+)(in) + ADP + phosphate + H(+). Its function is as follows. Part of the ABC transporter complex NikABCDE involved in nickel import. Responsible for energy coupling to the transport system. The polypeptide is Nickel import ATP-binding protein NikD (Rhodospirillum rubrum (strain ATCC 11170 / ATH 1.1.1 / DSM 467 / LMG 4362 / NCIMB 8255 / S1)).